We begin with the raw amino-acid sequence, 59 residues long: UPF0509 protein KPK_3153 (59 aa).

The protein belongs to the UPF0509 family.

This is UPF0509 protein KPK_3153 from Klebsiella pneumoniae (strain 342).